Consider the following 311-residue polypeptide: Progestin and adipoQ receptor family member 3 (311 aa).

The required for interaction with SREBF2 stretch occupies residues 1-20; the sequence is MHQKLLKSAHYIELGSYQYW. Residues 1-70 are Cytoplasmic-facing; sequence MHQKLLKSAH…KSLFILSNET (70 aa). The segment at 41-60 is required for interaction with SCAP; it reads KDNPYITDGYRAYLPSRLCI. A golgi targeting region spans residues 61-71; the sequence is KSLFILSNETV. Residues 71 to 91 traverse the membrane as a helical segment; the sequence is VNIWSHLLGFFLFFTLGIYDM. Topologically, residues 92 to 104 are lumenal; sequence TSVLPSASASRED. The helical transmembrane segment at 105 to 125 threads the bilayer; sequence FVICSICLFCFQVCMLCSVGY. The Cytoplasmic portion of the chain corresponds to 126–145; the sequence is HLFSCHRSEKTCRRWMALDY. Residues 146 to 166 traverse the membrane as a helical segment; that stretch reads AGISIGILGCYVSGVFYAFYC. At 167-172 the chain is on the lumenal side; the sequence is NNYWRQ. Residues 173-193 traverse the membrane as a helical segment; it reads VYLITVLAMILAVFFAQIHPS. Over 194–203 the chain is Cytoplasmic; the sequence is YLTQQWQRLR. The chain crosses the membrane as a helical span at residues 204 to 224; sequence PIIFCSVSGYGVIPTLHWVWL. Residues 225-235 are Lumenal-facing; sequence NGGVSAPIVQD. Residues 236–256 form a helical membrane-spanning segment; it reads FAPRVIVMYVIALLAFLFYIS. The Cytoplasmic segment spans residues 257-275; that stretch reads KVPERYFPGQLNYLGSSHQ. The chain crosses the membrane as a helical span at residues 276-296; the sequence is IWHVLAVVMLYWWHQSTVYVM. The Lumenal portion of the chain corresponds to 297 to 311; the sequence is QYRHSKPCPDYVSHL. Residues 299–303 form a golgi targeting region; it reads RHSKP.

Belongs to the ADIPOR family. Interacts with SCAP and SREBF2; the interactions are direct, increase in low cholesterol conditions and tether SCAP:SREBP complex to the Golgi apparatus. Interaction with SCAP is mutually exclusive with INSIG1. In hepatocytes, interacts with PPARA and HUWE1; the interactions promote PPARA poylubiquitination and HUWE1-mediated degradation. In macrophages, interacts with PPARG and STUB1; the interactions promote PPARG poylubiquitination and STUB1-mediated degradation.

The protein resides in the golgi apparatus membrane. Golgi-anchored protein which modulates its interactors acitivies by tethering them to the Golgi apparatus. Functions as a spatial regulator of RAF1 kinase by sequestrating it to the Golgi apparatus. Acts as a positive regulator of cholesterol biosynthesis by mediating the anchoring of the SCAP:SREBP complex in the Golgi apparatus, thereby promoting SCAP:SREBF2 complex formation, potentiating SREBF2 and SREBF1 processing and enhancing lipid synthesis. Also regulates PPARA and PPARG functions by mediating their interaction with E3 ubiquitin ligases, such as STUB1 or HUWE1, leading to their polyubiquitination and proteasome-mediated degradation. The chain is Progestin and adipoQ receptor family member 3 from Mus musculus (Mouse).